We begin with the raw amino-acid sequence, 315 residues long: MQGTVYKSTGSWYQVKAEDGKFYECRIKGKFRIQGIKSTNPVAVGDEVSFDLEEGVEEKTGVIKKIKERENYIIRKSVNLSKQTHIIASNIDQVFLLITLNNPPTLTTFIDRFLVTAEAYDITAVLLFNKVDTYSIEELAEVKYLAELYRSAGYECIGISAKNGKNVDKVKDKMIGNTSMISGHSGTGKSTLINAIEPALDLKTSEISRQHSQGQHTTTFAEMFDLSFNARIIDTPGIKGFGVVDMDREEIGDYFPEFFERKQDCKFHNCLHIEEPKCAIKDSLEEGEIAWSRYKSYLQIMEGEEDNYRVDQYQK.

Residues 80-241 form the CP-type G domain; sequence LSKQTHIIAS…IIDTPGIKGF (162 aa). GTP is bound by residues 129 to 132 and 183 to 191; these read NKVD and GHSGTGKST. 4 residues coordinate Zn(2+): Cys-265, Cys-270, His-272, and Cys-278.

Belongs to the TRAFAC class YlqF/YawG GTPase family. RsgA subfamily. As to quaternary structure, monomer. Associates with 30S ribosomal subunit, binds 16S rRNA. Zn(2+) serves as cofactor.

The protein localises to the cytoplasm. Functionally, one of several proteins that assist in the late maturation steps of the functional core of the 30S ribosomal subunit. Helps release RbfA from mature subunits. May play a role in the assembly of ribosomal proteins into the subunit. Circularly permuted GTPase that catalyzes slow GTP hydrolysis, GTPase activity is stimulated by the 30S ribosomal subunit. The chain is Small ribosomal subunit biogenesis GTPase RsgA from Christiangramia forsetii (strain DSM 17595 / CGMCC 1.15422 / KT0803) (Gramella forsetii).